A 289-amino-acid polypeptide reads, in one-letter code: S-methyl-5'-thioadenosine phosphorylase (289 aa).

Residues S11, 53–54 (RH), and 86–87 (SA) each bind phosphate. M187 contacts substrate. T188 is a binding site for phosphate. 211–213 (DYD) contributes to the substrate binding site.

The protein belongs to the PNP/MTAP phosphorylase family. MTAP subfamily. As to quaternary structure, homohexamer. Dimer of a homotrimer.

It catalyses the reaction S-methyl-5'-thioadenosine + phosphate = 5-(methylsulfanyl)-alpha-D-ribose 1-phosphate + adenine. The protein operates within amino-acid biosynthesis; L-methionine biosynthesis via salvage pathway; S-methyl-5-thio-alpha-D-ribose 1-phosphate from S-methyl-5'-thioadenosine (phosphorylase route): step 1/1. Its function is as follows. Catalyzes the reversible phosphorylation of S-methyl-5'-thioadenosine (MTA) to adenine and 5-methylthioribose-1-phosphate. Involved in the breakdown of MTA, a major by-product of polyamine biosynthesis. Responsible for the first step in the methionine salvage pathway after MTA has been generated from S-adenosylmethionine. Has broad substrate specificity with 6-aminopurine nucleosides as preferred substrates. In Thermosynechococcus vestitus (strain NIES-2133 / IAM M-273 / BP-1), this protein is S-methyl-5'-thioadenosine phosphorylase.